A 269-amino-acid chain; its full sequence is 4-hydroxy-4-methyl-2-oxoglutarate aldolase cghB (269 aa).

H48 serves as the catalytic Proton acceptor. Residues E155 and D181 each coordinate a divalent metal cation. D181 contacts substrate.

Belongs to the HpcH/HpaI aldolase family. In terms of assembly, homohexamer; trimer of dimers. Co(2+) is required as a cofactor. It depends on Mn(2+) as a cofactor. The cofactor is Zn(2+). Fe(2+) serves as cofactor. Requires Mg(2+) as cofactor.

It catalyses the reaction 4-hydroxy-4-methyl-2-oxoglutarate = 2 pyruvate. It functions in the pathway secondary metabolite biosynthesis. 4-hydroxy-4-methyl-2-oxoglutarate aldolase; part of the gene cluster that mediates the biosynthesis of the tetramic acid Sch210972, a potential anti-HIV fungal natural product that contains a decalin core. The PKS module of cghG together with the enoylreductase cghC catalyze the formation of the polyketide unit which is then conjugated to 4-hydroxyl-4-methyl glutamate (HMG) by the condensation domain of the cghG NRPS module. One unique structural feature of Sch210972 is the tetramic acid motif proposed to be derived from the non-proteinogenic amino acid HMG, by a Dieckmann-type condensation catalyzed by the reductase domain of cghG. The aldolase cghB catalyzes the aldol condensation of 2 molecules of pyruvic acid to yield the intermediate 4-hydroxyl-4-methyl-2-oxoglutarate (HMOG), which can then be stereoselectively transaminated by an unidentified enzyme to form HMG. The Diels-Alderase cghA then uses the Dieckmann product released by cghG as substrate and catalyzes the Diels-Alder cycloaddition to form the decalin ring of Sch210972. CghA also suppresses the nonenzymatic formation of the alternative stereoisomer. This is 4-hydroxy-4-methyl-2-oxoglutarate aldolase cghB from Chaetomium globosum (strain ATCC 6205 / CBS 148.51 / DSM 1962 / NBRC 6347 / NRRL 1970) (Soil fungus).